The following is a 517-amino-acid chain: Ribosome assembly protein 4 (517 aa).

The interval 1–25 (MATLAPPPSKRQRREEIQRTQTQQD) is disordered. Positions 34-128 (LGSFKANFID…TITLSAEPQA (95 aa)) are ubiquitin-like (UBL) domain. WD repeat units lie at residues 144-184 (GHGQ…PKFT), 187-226 (GHTGWVLGVSWSPDGKYLATCSMDTTVRVWDPESGKQVNQ), 230-277 (GHAK…HVLS), 278-316 (GHKGSVSCVKWGGTDLIYTGSHDRSVRVWDAVKGTLVHN), 351-397 (EERR…SKPV), 402-441 (GHQNKVNHVQFSPDGTLIASAGWDNSTKLWNARDGKFIKN), 444-483 (GHVAPVYQCAWSADSRLVVTGSKDCTLKVWNVRTGKLAMD), and 486-517 (GHEDEVYAVDWAADGELVASGGKDKAVRTWRN).

It belongs to the NLE1/RSA4 family. Associates with the pre-60S ribosomal particle. Interacts (via WD repeats) with uL18. Interacts (via UBL domain) with MDN1 (via VWFA/MIDAS domain). Interacts (via WD repeats) with NSA2.

Its subcellular location is the nucleus. The protein localises to the nucleolus. Involved in ribosome biogenesis. Required for processing and efficient intra-nuclear transport of pre-60S ribosomal subunits. Interacts with the AAA-ATPase Midasin, which is essential for the ATP-dependent dissociation of a group of nonribosomal factors from the pre-60S particle. The protein is Ribosome assembly protein 4 of Chaetomium thermophilum (strain DSM 1495 / CBS 144.50 / IMI 039719) (Thermochaetoides thermophila).